The chain runs to 132 residues: UPF0102 protein Acid_2433 (132 aa).

This sequence belongs to the UPF0102 family.

The chain is UPF0102 protein Acid_2433 from Solibacter usitatus (strain Ellin6076).